Reading from the N-terminus, the 107-residue chain is MKNLAGLMKQASQMQAKMEAAQSNLASLIVDGSAGAGLVTVKLTGKGEMRDLKIDPQLADPSDIETLQDLIVAAYTDAKTKAEAASSEAMRDVTGGLDLPAGLKLPF.

The protein belongs to the YbaB/EbfC family. In terms of assembly, homodimer.

The protein resides in the cytoplasm. Its subcellular location is the nucleoid. Its function is as follows. Binds to DNA and alters its conformation. May be involved in regulation of gene expression, nucleoid organization and DNA protection. The protein is Nucleoid-associated protein GOX0603 of Gluconobacter oxydans (strain 621H) (Gluconobacter suboxydans).